A 295-amino-acid chain; its full sequence is Inward rectifier potassium channel Kirbac3.1 (295 aa).

The Cytoplasmic segment spans residues 1–47 (MTGGMKPPARKPRILNSDGSSNITRLGLEKRGWLDDHYHDLLTVSWP). A helical membrane pass occupies residues 48 to 69 (VFITLITGLYLVTNALFALAYL). Topologically, residues 70 to 82 (ACGDVIENARPGS) are extracellular. Positions 83–95 (FTDAFFFSVQTMA) form an intramembrane region, helical; Pore-forming. The short motif at 96 to 100 (TIGYG) is the Selectivity filter element. Residues 107–131 (PLANTLVTLEALCGMLGLAVAASLI) form a helical membrane-spanning segment. Residues 132–295 (YARFTRPTAG…DLGKFHEIAQ (164 aa)) are Cytoplasmic-facing.

This sequence belongs to the inward rectifier-type potassium channel (TC 1.A.2.1) family. KCNJ11 subfamily. In terms of assembly, homotetramer.

It localises to the membrane. Its function is as follows. Inward rectifier potassium channel that mediates potassium uptake into the cell. Inward rectifier potassium channels are characterized by a greater tendency to allow potassium to flow into the cell rather than out of it. The inward rectification may be achieved by the blockage of outward current by cytoplasmic divalent metal ions and polyamines. Complements an E.coli mutant that is defective in K(+) uptake. In Paramagnetospirillum magnetotacticum (Aquaspirillum magnetotacticum), this protein is Inward rectifier potassium channel Kirbac3.1.